Reading from the N-terminus, the 1225-residue chain is Cytosolic carboxypeptidase 1 (1225 aa).

A compositionally biased stretch (acidic residues) spans 366–392 (DDVVDESDDNEDTDAETEAEAENEDSD). The segment at 366–398 (DDVVDESDDNEDTDAETEAEAENEDSDQICKND) is disordered. The Peptidase M14 domain occupies 842 to 1132 (YPYTYSTLKM…KFCVGLLRLK (291 aa)). Zn(2+) contacts are provided by histidine 914, glutamate 917, and histidine 1011. Glutamate 1096 serves as the catalytic Proton donor/acceptor. Residues 1181-1193 (YSAESNDDVDPDL) are compositionally biased toward acidic residues. Residues 1181–1225 (YSAESNDDVDPDLPENIGDFETSTLEEESFSDSEITRTHMSGQST) form a disordered region.

This sequence belongs to the peptidase M14 family. Requires Zn(2+) as cofactor.

The protein localises to the cytoplasm. Its subcellular location is the cytosol. The protein resides in the nucleus. It is found in the mitochondrion. It catalyses the reaction (L-glutamyl)(n+1)-gamma-L-glutamyl-L-glutamyl-[protein] + H2O = (L-glutamyl)(n)-gamma-L-glutamyl-L-glutamyl-[protein] + L-glutamate. The catalysed reaction is C-terminal L-alpha-aminoacyl-L-glutamyl-L-glutamyl-[tubulin] + H2O = C-terminal L-alpha-aminoacyl-L-glutamyl-[tubulin] + L-glutamate. In terms of biological role, metallocarboxypeptidase that mediates protein deglutamylation of tubulin and non-tubulin target proteins. Catalyzes the removal of polyglutamate side chains present on the gamma-carboxyl group of glutamate residues within the C-terminal tail of alpha- and beta-tubulin. Specifically cleaves tubulin long-side-chains, while it is not able to remove the branching point glutamate. Also catalyzes the removal of polyglutamate residues from the carboxy-terminus of alpha-tubulin as well as non-tubulin proteins. The chain is Cytosolic carboxypeptidase 1 (agtpbp1) from Xenopus laevis (African clawed frog).